A 1339-amino-acid polypeptide reads, in one-letter code: Astrotactin-2 (1339 aa).

Residues 1-49 (MAAAGARLSPGPGSGLRGRPRLCFHPGPPPLLPLLLLFLLLLPPPPLLA) form the signal peptide. The Lumenal portion of the chain corresponds to 50-206 (GATAAASREP…IVEEQMHILH (157 aa)). An N-linked (GlcNAc...) asparagine glycan is attached at Asn168. The chain crosses the membrane as a helical span at residues 207–227 (ISVMGGLIALLLLLLVFTVAL). The Cytoplasmic portion of the chain corresponds to 228 to 434 (YAQRRWQKRR…KGLLKSPVNK (207 aa)). Disordered stretches follow at residues 296–316 (EEDEEPPRRANHVSREDEFGS) and 363–408 (TPIE…ADDE). A helical transmembrane segment spans residues 435 to 455 (TALTLIAVSSCILAMVCGSQM). Over 456-1339 (SCPLTVKVTL…RNTYGESKGR (884 aa)) the chain is Lumenal. EGF-like domains follow at residues 510–550 (VRDL…HLCV), 651–695 (PVRD…SGCY), and 699–751 (KGID…KSCL). Cystine bridges form between Cys514–Cys526, Cys522–Cys533, Cys535–Cys549, Cys655–Cys668, Cys662–Cys679, Cys681–Cys694, Cys703–Cys715, Cys711–Cys735, and Cys737–Cys750. N-linked (GlcNAc...) asparagine glycosylation is found at Asn770 and Asn783. 3 disulfide bridges follow: Cys825–Cys987, Cys916–Cys977, and Cys983–Cys990. Residue Asn1020 is glycosylated (N-linked (GlcNAc...) asparagine). Disulfide bonds link Cys1036/Cys1047, Cys1049/Cys1062, Cys1136/Cys1158, Cys1190/Cys1277, and Cys1298/Cys1321. The region spanning 1065–1188 (LLQPVLRLSP…SELSTVTLRT (124 aa)) is the Fibronectin type-III domain.

This sequence belongs to the astrotactin family. As to quaternary structure, interacts with ASTN1; the interaction is not calcium-dependent.

It localises to the membrane. It is found in the perikaryon. The protein localises to the cytoplasm. The protein resides in the cell cortex. Its subcellular location is the early endosome. It localises to the late endosome. It is found in the cytoplasmic vesicle. The protein localises to the clathrin-coated vesicle. Functionally, mediates recycling of the neuronal cell adhesion molecule ASTN1 to the anterior pole of the cell membrane in migrating neurons. Promotes ASTN1 internalization and intracellular transport of endocytosed ASTN1. Selectively binds inositol-4,5-bisphosphate, inositol-3,4,5-trisphosphate and inositol-1,3,4,5-tetrakisphosphate, suggesting it is recruited to membranes that contain lipids with a phosphoinositide headgroup. The polypeptide is Astrotactin-2 (ASTN2) (Homo sapiens (Human)).